Consider the following 483-residue polypeptide: 5-hydroxytryptamine receptor 3A (483 aa).

A signal peptide spans 1 to 23; sequence MPLCIPQVLLALFLSVLIAQGEG. The Extracellular segment spans residues 24-246; that stretch reads SRRRATQAHS…MKFYVVIRRR (223 aa). N-linked (GlcNAc...) asparagine glycans are attached at residues Asn-109, Asn-175, and Asn-191. A disulfide bridge links Cys-162 with Cys-176. Residues 247-273 form a helical membrane-spanning segment; sequence PLFYAVSLLLPSIFLMVVDIVGFCLPP. Over 274–278 the chain is Cytoplasmic; it reads DSGER. Residues 279 to 297 form a helical membrane-spanning segment; it reads VSFKITLLLGYSVFLIIVS. At 298-307 the chain is on the extracellular side; it reads DTLPATAIGT. A helical membrane pass occupies residues 308-326; the sequence is PLIGVYFVVCMALLVISLA. Residues 327 to 460 are Cytoplasmic-facing; it reads ETIFIVQLVH…GYVLDRLLFR (134 aa). The interval 393-414 is disordered; that stretch reads VGSPQDLEKTSRSRDSPLPPPR. Over residues 398-407 the composition is skewed to basic and acidic residues; that stretch reads DLEKTSRSRD. The interval 419-455 is HA-stretch; determines single-channel conductance in 5-HT3 receptors; sequence AVRGLLQELSSIRHSLEKRDEMREVARDWLRVGYVLD. Residues 461 to 480 form a helical membrane-spanning segment; sequence IYLLAVLAYSITLVTLWSIW. Residues 481–483 lie on the Extracellular side of the membrane; the sequence is HYS.

It belongs to the ligand-gated ion channel (TC 1.A.9) family. 5-hydroxytryptamine receptor (TC 1.A.9.2) subfamily. HTR3A sub-subfamily. As to quaternary structure, forms homopentameric as well as heteropentameric serotonin-activated cation-selective channel complexes with HTR3B or HTR3C or HTR3D or HTR3E. The homomeric complex is functional but exhibits low conductance with modified voltage dependence, and decreased agonist and antagonist affinity. Heteropentameric complexes display properties which resemble that of neuronal serotonin-activated channels in vivo. Interacts with RIC3. Expressed in central and peripheral neurons.

It is found in the postsynaptic cell membrane. It localises to the cell membrane. The enzyme catalyses Na(+)(in) = Na(+)(out). It catalyses the reaction K(+)(in) = K(+)(out). The catalysed reaction is Ca(2+)(in) = Ca(2+)(out). It carries out the reaction Mg(2+)(in) = Mg(2+)(out). Functionally, forms serotonin (5-hydroxytryptamine/5-HT3)-activated cation-selective channel complexes, which when activated cause fast, depolarizing responses in neurons. The chain is 5-hydroxytryptamine receptor 3A from Rattus norvegicus (Rat).